The primary structure comprises 203 residues: Transmembrane emp24 domain-containing protein (203 aa).

Residues 1–22 (MASIRLLPSCIVLMFLARSSLC) form the signal peptide. Over 23-170 (YFITIDAHGE…RSINDNTNSR (148 aa)) the chain is Lumenal. The GOLD domain occupies 32-114 (EECFHDKVTS…PKVLKFSMDI (83 aa)). The helical transmembrane segment at 171–191 (VVWWSFFESLVLVAMTLGQVY) threads the bilayer. Over 192–203 (YLKRFFEVRRVV) the chain is Cytoplasmic.

It belongs to the EMP24/GP25L family.

It localises to the cytoplasmic vesicle membrane. Its function is as follows. Could have a role in the budding of coatomer-coated and other species of coated vesicles. This is Transmembrane emp24 domain-containing protein from Nematostella vectensis (Starlet sea anemone).